A 270-amino-acid chain; its full sequence is Palmitoyltransferase ZDHHC12-A (270 aa).

The Cytoplasmic portion of the chain corresponds to 1–8; the sequence is MNKSLFKS. The chain crosses the membrane as a helical span at residues 9–29; sequence GCLVRTAHVILTWIITLILFL. At 30-45 the chain is on the lumenal side; sequence HNTDLRRCQERGDLLQ. A helical transmembrane segment spans residues 46-66; sequence PLVFSSVLLLSVLLYFTVSLM. At 67-145 the chain is on the cytoplasmic side; the sequence is DPGFVLSDSQ…DNCVGELNHR (79 aa). The DHHC domain maps to 102–152; it reads RRCGYCFLLQPMRARHCKWCKRCVRRFDHHCPWIDNCVGELNHRWFLLYLC. Cysteine 132 (S-palmitoyl cysteine intermediate) is an active-site residue. Residues 146-166 form a helical membrane-spanning segment; sequence WFLLYLCVQFTAVCWGLQSAW. Over 167–182 the chain is Lumenal; sequence SGFISAPSWQQWFTQN. A helical transmembrane segment spans residues 183-203; that stretch reads VFLLVAFAVTAVFSVVLLLLL. At 204 to 270 the chain is on the cytoplasmic side; sequence CIHAYLASVN…MYIRHNNASV (67 aa).

This sequence belongs to the DHHC palmitoyltransferase family.

It is found in the golgi apparatus membrane. The protein localises to the endoplasmic reticulum membrane. It catalyses the reaction L-cysteinyl-[protein] + hexadecanoyl-CoA = S-hexadecanoyl-L-cysteinyl-[protein] + CoA. Its function is as follows. Palmitoyltransferase that catalyzes the addition of palmitate onto various protein substrates. Has a palmitoyltransferase activity toward gephyrin/GPHN, regulating its clustering at synapses and its function in gamma-aminobutyric acid receptor clustering. Acts as an inhibitor of the NLRP3 inflammasome by mediating palmitoylation of NLRP3, thereby promoting NLRP3 degradation by the chaperone-mediated autophagy (CMA) process. This chain is Palmitoyltransferase ZDHHC12-A, found in Danio rerio (Zebrafish).